The sequence spans 315 residues: ATP synthase gamma chain (315 aa).

Belongs to the ATPase gamma chain family. As to quaternary structure, F-type ATPases have 2 components, CF(1) - the catalytic core - and CF(0) - the membrane proton channel. CF(1) has five subunits: alpha(3), beta(3), gamma(1), delta(1), epsilon(1). CF(0) has three main subunits: a, b and c.

Its subcellular location is the cellular thylakoid membrane. In terms of biological role, produces ATP from ADP in the presence of a proton gradient across the membrane. The gamma chain is believed to be important in regulating ATPase activity and the flow of protons through the CF(0) complex. This is ATP synthase gamma chain from Cyanothece sp. (strain PCC 7425 / ATCC 29141).